The sequence spans 2381 residues: MNGDMPHVPITTLAGIAGLTDLLNQLPLPSPLPGTTTKSLLYNGRVAEDVGHLLGCRDETLVSQLANSLSQVSTEHIELKDSLGSDELEGDVPVLLQLLMSRNPNIFRNKTAPNTPQYPAQAGISQQSMAPPYKITHGSMQGSPASANYQQASMSHSPSGHFVPGQSGPGGRFLPQQGSPVPSPYAPQSPATGYRQYPHPPAYSQHQHLQQGSVASPMIPGAMRNVHENKDQMRMGFTSHLLQSSPPYTPPCDGTKDLHLGSQDKQRGQKSSEGEQDSPDKATVYDIVGSPAKDHTKLILRPSRARPAEVELGGMYPGSDPEGELVEALAAIERMESEAAMETERSAKEVQDKDKPLKKRKQDSHPQEPGAAGTAGSGSGAPGGGGGANAGHRLAPQEASAAGTSASRPGLQVSLEQAGRVEDDCMGMPIPASEAQRWPQEPQEGVTPKAVKHEHDHDPEHPHYDDKQPDTPRQKHRPEGRHGDGGAQRAAVQSGSKQVELPPYMLGENTGVLKNFTIPKIRKGELGGGDIPEGWKQPCVRLERLEADVDVKKSVKPVVVLQKLSIDEVQRLMRERDSRASKSGKNRLSSGRSGKGGIDPSVLKDLPPELLAEIESTMPLCERVKMNKRKRSTVNERPKYAEDSSEDEEFSSRKRQRKDRDRTWEAEERDRRSSGEHRRGNFDARRGSGSRYDDSDQDSPPPSLNEVARRLKMKQKKRKVYEPKLTPEEMMDSSTFKRFTLSIDNILENLEDVDFTAQDDDEIPQELLLGKQQLNELGSESAKIKAMGITSRIPSDKLVKLLNILEKNILDGASLSTLMNLDNEGEDEERLWRDLIMERVTKSADACLTALNIMTSTHMPKAVYIEDVIERVLQYTKFHLQNTLYPQYDPVYRVNPKGGSMLSSRAKRAKCSTAKQKVIIMLYNKVCDVVSNISELLEIQLMTDTTILQVSSMGITPFFVENVSELQLCAIKLVTAVFSRYEKHRQLILEEIFTSLARLPTSKRSLRNFRLNSSDDEGEPIYIQMVSALVLQLIQCVVHLPADRDSEDDHKKVDDDVFITNSYETARRTAQNFLSVFLKKCGSKQGEEDYRPLFENFVQDLLSTVNKPDWPASELLLSLLGRLLVHQFSNKQTEMALRVASLDYLGTVAARLRKDSVTSRMDQKAIERIIRENTEGDETQRLQKALLDYMDENAETDPALAFARKFYIAQWFRDCTTETEKAMRSQNQKEDDSDGAQHAKELQATGDIMQRAETRKKFLHSVVKSTPNQFTTLRMNSDTVDYDDACLIVRYLASTRPFSQSFDIYLTQILRVLGESAIAVRTKAMKCLSEVVAVDPSILARSDMQRGVHGRLMDNSTSVREAAVELLGRFVLSRPQLTEQYYDMLIERILDTGISVRKRVIKILRDICLEQPNFSKITEMCVKMIRRVNDEEGIKKLVNETFQKLWFTPTPNHDKETMNRKILNITDVVSACKDTGYDWFEQLLQNLLKSEEDSSYKPTRKACVQLVDNLVEHILKYEEALAEHKSVNSTRLVACITTLYLFSKIRAQLMVKHAMTMQPYLTTKCSSQSDFMVICNVAKILELVVPLMDHPSESFLTTIEEDLMKLILKYGMTVVQYCVSCLGAIVNKVTHNYKFVWACFNRYYGALTKLKVQHQEGTNSMALAATKAALLRSLFTAGALCRHFDFDLEQFKGTTKVVIKEKVLELLLYFTNHEDEEVKCKAIIGLGFLFIMHPSQMFVPEVKTLYNGLLSDKRSSITLKIQVLKNLQMYLQEEDTRMQEADREWQKLSKQEDLKEMGDISSGMSSSIMQLYLKQVLESFFHAQSSVRHFALNVIALTLSQGLIHPVQCVPYLIAMGTDAEPTMRNKADQQLVEIDKKYTGFIHMKAVAGMKMSYQVQQAVFGSAGSVIRGFRQDESNSAQCSHLYSMVRANRQHRRAFLISLLNLFDDSSKMEVNMLLFIADNLAYFPYQSQEEPLFIMHHIDITLSVSGSNLLQTFKESLVKIPGRKSRKRRRRRRRPQRQQPPPPPPQQQQQQNGSEEERGAQDEERERHSGDEEYDDDDYEEDEDGHRVRKPKPTEDIRQSESDSDSDLDDVDAVMERLPDDSTSLVDFARASQGILLLLVLKQHLKNLYGFSDGKIQKYSPSESAKVYDKAVNRKTLANFNPQQTIDFLRHHDVHGELTYELKRKIVKQFLDFKLLMEHLDPDEEDEDGDTSANVRNKAITALLGGAAASPRNHHTGDSEEDDERSEGEERTPGASRRGRRTGDSADLLSANMNESVSALDIIAIHCPKYRDRPQIARVIQKNSDGYSIHWMAGSYSSTWAEAKKRDGRKLVPWVDSIKETDIIYKKITLTSGNKLNHKVAQTLRSLYAAKDRNSS.

One copy of the HEAT 1 repeat lies at Ser-85–Ile-124. Disordered regions lie at residues Pro-131–Gln-211, His-240–Gly-289, and Leu-329–Pro-503. A compositionally biased stretch (polar residues) spans Gly-138–Pro-158. Composition is skewed to basic and acidic residues over residues Gly-254–Glu-273 and Glu-333–Lys-355. Residues Gly-373 to Asn-389 are compositionally biased toward gly residues. Residues Val-451–Arg-473 are compositionally biased toward basic and acidic residues. The short motif at Lys-552–Ser-565 is the PxVxL motif element. The span at Gln-570 to Ala-580 shows a compositional bias: basic and acidic residues. 2 disordered regions span residues Gln-570–Lys-604 and Arg-629–Ala-708. The segment covering Ser-581–Arg-592 has biased composition (polar residues). Basic and acidic residues-rich tracts occupy residues Thr-633–Glu-642 and Lys-658–Asp-694. 4 HEAT repeats span residues Ser-1299–Ser-1337, Pro-1375–Asn-1413, Tyr-1477–Lys-1516, and Leu-1843–Gly-1881. Disordered stretches follow at residues Ile-2005–Asp-2095 and Leu-2228–Ala-2271. Basic residues predominate over residues Pro-2006–Gln-2021. The segment covering Glu-2040–Asp-2056 has biased composition (basic and acidic residues). Acidic residues predominate over residues Glu-2057–Glu-2068. Basic and acidic residues predominate over residues Lys-2077 to Glu-2086.

It belongs to the SCC2/Nipped-B family.

Its subcellular location is the nucleus. May play a structural role in chromatin. Involved in sister chromatid cohesion, possibly by facilitating the cohesin complex loading. Transcription factor, which may promote cortical neuron migration during brain development by regulating the transcription of crucial genes in this process. The protein is Nipped-B-like protein A (nipbla) of Danio rerio (Zebrafish).